The primary structure comprises 545 residues: Cryptochrome-1 (545 aa).

Residues 3-140 (INNILWFRHG…RCVENVSHTL (138 aa)) enclose the Photolyase/cryptochrome alpha/beta domain. Residues R237, S265, S267, Q308, H375, 407 to 409 (DAD), C413, and N416 each bind FAD.

This sequence belongs to the DNA photolyase class-1 family. In terms of assembly, interacts with tim and per; promoted by light conditions. Requires FAD as cofactor.

The protein resides in the cytoplasm. The protein localises to the perinuclear region. It localises to the nucleus. Functionally, blue light-dependent regulator that is the input of the circadian feedback loop. Has no photolyase activity for cyclobutane pyrimidine dimers or 6-4 photoproducts. Regulation of expression by light suggests a role in photoreception for locomotor activity rhythms. Functions, together with per, as a transcriptional repressor required for the oscillation of peripheral circadian clocks and for the correct specification of clock cells. Genes directly activated by the transcription factors Clock (Clk) and cycle (cyc) are repressed by cry. The sequence is that of Cryptochrome-1 from Anopheles gambiae (African malaria mosquito).